The chain runs to 300 residues: Auxin-responsive protein IAA7 (300 aa).

Disordered stretches follow at residues 1-80 (MGEA…DGDK) and 92-125 (VSHS…LASN). Residues 43–47 (LSLGL) carry the EAR-like (transcriptional repression) motif. Residues 92–103 (VSHSQGKANKNK) show a composition bias toward polar residues. One can recognise a PB1 domain in the interval 177-281 (APFIKINMDG…SVKRLRVLKT (105 aa)).

Belongs to the Aux/IAA family. As to quaternary structure, homodimers and heterodimers. In terms of tissue distribution, expressed at low levels in roots and shoots.

The protein localises to the nucleus. Functionally, aux/IAA proteins are short-lived transcriptional factors that function as repressors of early auxin response genes at low auxin concentrations. The sequence is that of Auxin-responsive protein IAA7 (IAA7) from Oryza sativa subsp. japonica (Rice).